We begin with the raw amino-acid sequence, 452 residues long: Phosphoglucosamine mutase (452 aa).

The Phosphoserine intermediate role is filled by serine 104. Mg(2+) is bound by residues serine 104, aspartate 244, aspartate 246, and aspartate 248. A Phosphoserine modification is found at serine 104.

It belongs to the phosphohexose mutase family. Mg(2+) is required as a cofactor. Post-translationally, activated by phosphorylation.

It catalyses the reaction alpha-D-glucosamine 1-phosphate = D-glucosamine 6-phosphate. Its function is as follows. Catalyzes the conversion of glucosamine-6-phosphate to glucosamine-1-phosphate. This Pediococcus pentosaceus (strain ATCC 25745 / CCUG 21536 / LMG 10740 / 183-1w) protein is Phosphoglucosamine mutase.